The sequence spans 553 residues: Carboxypeptidase Y homolog A (553 aa).

The N-terminal stretch at 1–17 is a signal peptide; it reads MRVLSTTLLIGAAAAAV. A propeptide spanning residues 18-134 is cleaved from the precursor; sequence SPPQQVLQAP…RLEAFDLRVK (117 aa). 5 disulfides stabilise this stretch: cysteine 189/cysteine 428, cysteine 323/cysteine 337, cysteine 347/cysteine 370, cysteine 354/cysteine 363, and cysteine 392/cysteine 398. A glycan (N-linked (GlcNAc...) asparagine) is linked at asparagine 220. Residue serine 276 is part of the active site. Residue aspartate 467 is part of the active site. Asparagine 518 is a glycosylation site (N-linked (GlcNAc...) asparagine). Residue histidine 529 is part of the active site.

It belongs to the peptidase S10 family.

The protein resides in the vacuole. It catalyses the reaction Release of a C-terminal amino acid with broad specificity.. In terms of biological role, vacuolar carboxypeptidase involved in degradation of small peptides. Digests preferentially peptides containing an aliphatic or hydrophobic residue in P1' position, as well as methionine, leucine or phenylalanine in P1 position of ester substrate. This chain is Carboxypeptidase Y homolog A (cpyA), found in Talaromyces stipitatus (strain ATCC 10500 / CBS 375.48 / QM 6759 / NRRL 1006) (Penicillium stipitatum).